An 84-amino-acid polypeptide reads, in one-letter code: Acyl carrier protein (84 aa).

The Carrier domain maps to 4–80; that stretch reads SETFEKVKKI…EAVDYINNQV (77 aa). S40 is modified (O-(pantetheine 4'-phosphoryl)serine).

It belongs to the acyl carrier protein (ACP) family. In terms of processing, 4'-phosphopantetheine is transferred from CoA to a specific serine of apo-ACP by AcpS. This modification is essential for activity because fatty acids are bound in thioester linkage to the sulfhydryl of the prosthetic group.

The protein localises to the cytoplasm. It participates in lipid metabolism; fatty acid biosynthesis. Its function is as follows. Carrier of the growing fatty acid chain in fatty acid biosynthesis. The polypeptide is Acyl carrier protein (Nostoc sp. (strain PCC 7120 / SAG 25.82 / UTEX 2576)).